Reading from the N-terminus, the 82-residue chain is Putative membrane protein insertion efficiency factor (82 aa).

It belongs to the UPF0161 family.

The protein resides in the cell inner membrane. Its function is as follows. Could be involved in insertion of integral membrane proteins into the membrane. In Rickettsia typhi (strain ATCC VR-144 / Wilmington), this protein is Putative membrane protein insertion efficiency factor.